The following is a 185-amino-acid chain: Endoribonuclease YbeY (185 aa).

Residues H142, H146, and H152 each coordinate Zn(2+).

The protein belongs to the endoribonuclease YbeY family. The cofactor is Zn(2+).

Its subcellular location is the cytoplasm. Single strand-specific metallo-endoribonuclease involved in late-stage 70S ribosome quality control and in maturation of the 3' terminus of the 16S rRNA. The polypeptide is Endoribonuclease YbeY (Parvibaculum lavamentivorans (strain DS-1 / DSM 13023 / NCIMB 13966)).